The sequence spans 448 residues: Histidinol dehydrogenase (448 aa).

NAD(+) is bound by residues tyrosine 136, glutamine 197, and asparagine 220. Serine 243, glutamine 265, and histidine 268 together coordinate substrate. Zn(2+) contacts are provided by glutamine 265 and histidine 268. Catalysis depends on proton acceptor residues glutamate 333 and histidine 334. Positions 334, 367, 421, and 426 each coordinate substrate. Aspartate 367 is a binding site for Zn(2+). Histidine 426 contributes to the Zn(2+) binding site.

Belongs to the histidinol dehydrogenase family. Zn(2+) is required as a cofactor.

It catalyses the reaction L-histidinol + 2 NAD(+) + H2O = L-histidine + 2 NADH + 3 H(+). It functions in the pathway amino-acid biosynthesis; L-histidine biosynthesis; L-histidine from 5-phospho-alpha-D-ribose 1-diphosphate: step 9/9. Catalyzes the sequential NAD-dependent oxidations of L-histidinol to L-histidinaldehyde and then to L-histidine. The protein is Histidinol dehydrogenase of Pseudomonas syringae pv. tomato (strain ATCC BAA-871 / DC3000).